Reading from the N-terminus, the 252-residue chain is MTNYAFKFGYEGSYFTGFQRGNGDHSVEDTIIDTLKASGFDYAIKAAARTDRYVSALSNVFSLETGRSPEAVAGLINSRIDHIYVHSYAEVPDDFNPRHCTFKTYRYYILRQDLDCISLDINLGKFIGTHDFRRFVRADSRNTVRTIINASCKNDNGLLYLEFSARSFLWNQIRTMVAFILDNIGVETDPFSTSERYPRVARAQNLLLWDIYYDGIEFRKVKKIPKKMQGVYENSIMNYILAENLMHRFGIA.

Catalysis depends on D51, which acts as the Nucleophile. Residue Y105 participates in substrate binding.

The protein belongs to the tRNA pseudouridine synthase TruA family.

It carries out the reaction uridine(38/39/40) in tRNA = pseudouridine(38/39/40) in tRNA. Formation of pseudouridine at positions 38, 39 and 40 in the anticodon stem and loop of transfer RNAs. The polypeptide is tRNA pseudouridine synthase A (Thermoplasma acidophilum (strain ATCC 25905 / DSM 1728 / JCM 9062 / NBRC 15155 / AMRC-C165)).